The following is a 213-amino-acid chain: N-(5'-phosphoribosyl)anthranilate isomerase (213 aa).

It belongs to the TrpF family.

It carries out the reaction N-(5-phospho-beta-D-ribosyl)anthranilate = 1-(2-carboxyphenylamino)-1-deoxy-D-ribulose 5-phosphate. It participates in amino-acid biosynthesis; L-tryptophan biosynthesis; L-tryptophan from chorismate: step 3/5. This chain is N-(5'-phosphoribosyl)anthranilate isomerase, found in Leptospira interrogans serogroup Icterohaemorrhagiae serovar copenhageni (strain Fiocruz L1-130).